We begin with the raw amino-acid sequence, 243 residues long: 3-deoxy-manno-octulosonate cytidylyltransferase (243 aa).

The protein belongs to the KdsB family.

The protein resides in the cytoplasm. It catalyses the reaction 3-deoxy-alpha-D-manno-oct-2-ulosonate + CTP = CMP-3-deoxy-beta-D-manno-octulosonate + diphosphate. Its pathway is nucleotide-sugar biosynthesis; CMP-3-deoxy-D-manno-octulosonate biosynthesis; CMP-3-deoxy-D-manno-octulosonate from 3-deoxy-D-manno-octulosonate and CTP: step 1/1. It participates in bacterial outer membrane biogenesis; lipopolysaccharide biosynthesis. In terms of biological role, activates KDO (a required 8-carbon sugar) for incorporation into bacterial lipopolysaccharide in Gram-negative bacteria. This is 3-deoxy-manno-octulosonate cytidylyltransferase from Helicobacter pylori (strain G27).